The chain runs to 215 residues: Ribonuclease T (215 aa).

One can recognise an Exonuclease domain in the interval Val20 to Phe194. The Mg(2+) site is built by Asp23, Glu25, His181, and Asp186. The active-site Proton donor/acceptor is the His181.

Belongs to the RNase T family. In terms of assembly, homodimer. The cofactor is Mg(2+).

Functionally, trims short 3' overhangs of a variety of RNA species, leaving a one or two nucleotide 3' overhang. Responsible for the end-turnover of tRNA: specifically removes the terminal AMP residue from uncharged tRNA (tRNA-C-C-A). Also appears to be involved in tRNA biosynthesis. This Klebsiella pneumoniae subsp. pneumoniae (strain ATCC 700721 / MGH 78578) protein is Ribonuclease T.